The chain runs to 210 residues: MKTGKFIVIEGLEGAGKSSTHQVVVNTLKEFGIHEVVFTREPGGTPLAEKLRYLIKHEVEELVTAKAELLMLYAARVQLVENVIKPALAQGKWVVGDRHDLSSQAYQGGGRGLDQHLMTTLKNAVLGDFKPDFTLYLDIEPEIGLARVRGRGELDRIEQQNLDFFHRTRARYLQLVQQDPNAVLINADQPIELVQQDIRKAVQKFIEENV.

11–18 (GLEGAGKS) lines the ATP pocket.

Belongs to the thymidylate kinase family.

It catalyses the reaction dTMP + ATP = dTDP + ADP. Its function is as follows. Phosphorylation of dTMP to form dTDP in both de novo and salvage pathways of dTTP synthesis. This chain is Thymidylate kinase, found in Histophilus somni (strain 129Pt) (Haemophilus somnus).